The chain runs to 404 residues: CD209 antigen (404 aa).

Topologically, residues 1–37 (MSDSKEPRLQQLGLLEEEQLRGLGFRQTRGYKSLAGC) are cytoplasmic. 3 short sequence motifs (endocytosis signal) span residues 14–15 (LL), 16–18 (EEE), and 31–34 (YKSL). A helical; Signal-anchor for type II membrane protein transmembrane segment spans residues 38–58 (LGHGVLVLQLLSFTLLAGLFV). Over 59-404 (QVSKVPSSIS…APATPNPPPA (346 aa)) the chain is Extracellular. N-linked (GlcNAc...) asparagine glycosylation is present at Asn-80. Tandem repeats lie at residues 96–118 (KLQEIYQELTQLKAAVSELPEKS), 119–141 (KQQEIYQELTQLKAAVSELPEKS), 142–164 (KLQEIYQELTQLKAAVSELPEKS), 165–187 (KLQEIYQELTRLKAAVGELPEKC), 188–210 (KLQEIYQELTRLKAAVDELPEKS), 211–233 (KLQEIYQELTQLKAAVGELPEKS), and 234–257 (RLQEIYQELTQLKAAVERLCHPCP). The interval 96–257 (KLQEIYQELT…AVERLCHPCP (162 aa)) is 7 X approximate tandem repeats. Disulfide bonds link Cys-256–Cys-267, Cys-284–Cys-377, and Cys-356–Cys-369. One can recognise a C-type lectin domain in the interval 263–378 (FQGNCYFISN…CNLAKFWICK (116 aa)). 6 residues coordinate Ca(2+): Glu-347, Asn-349, Val-351, Glu-354, Asn-365, and Asp-366.

Homotetramer. Interacts with C1QBP; the interaction is indicative for a C1q:C1QBP:CD209 signaling complex. Interacts with ICAM2 and ICAM3 by binding to mannose-like carbohydrates. Interacts (via C-type lectin domain) with CEACAM1 (via Lewis X moieties); this interaction is regulated by the glycosylation pattern of CEACAM1 on cell types and regulates contact between dendritic cells and neutrophils.

The protein resides in the membrane. Functionally, pathogen-recognition receptor expressed on the surface of immature dendritic cells (DCs) and involved in initiation of primary immune response. Thought to mediate the endocytosis of pathogens which are subsequently degraded in lysosomal compartments. The receptor returns to the cell membrane surface and the pathogen-derived antigens are presented to resting T-cells via MHC class II proteins to initiate the adaptive immune response. Probably recognizes in a calcium-dependent manner high mannose N-linked oligosaccharides in a variety of pathogen antigens. Its function is as follows. On DCs it is a high affinity receptor for ICAM2 and ICAM3 by binding to mannose-like carbohydrates. May act as a DC rolling receptor that mediates transendothelial migration of DC presursors from blood to tissues by binding endothelial ICAM2. Seems to regulate DC-induced T-cell proliferation by binding to ICAM3 on T-cells in the immunological synapse formed between DC and T-cells. This chain is CD209 antigen (CD209), found in Pongo pygmaeus (Bornean orangutan).